A 278-amino-acid polypeptide reads, in one-letter code: 4-deoxy-L-threo-5-hexosulose-uronate ketol-isomerase (278 aa).

4 residues coordinate Zn(2+): His-196, His-198, Glu-203, and His-245.

This sequence belongs to the KduI family. Zn(2+) serves as cofactor.

The enzyme catalyses 5-dehydro-4-deoxy-D-glucuronate = 3-deoxy-D-glycero-2,5-hexodiulosonate. It functions in the pathway glycan metabolism; pectin degradation; 2-dehydro-3-deoxy-D-gluconate from pectin: step 4/5. Its function is as follows. Catalyzes the isomerization of 5-dehydro-4-deoxy-D-glucuronate to 3-deoxy-D-glycero-2,5-hexodiulosonate. This chain is 4-deoxy-L-threo-5-hexosulose-uronate ketol-isomerase, found in Yersinia enterocolitica serotype O:8 / biotype 1B (strain NCTC 13174 / 8081).